The sequence spans 357 residues: UDP-N-acetylglucosamine--N-acetylmuramyl-(pentapeptide) pyrophosphoryl-undecaprenol N-acetylglucosamine transferase (357 aa).

UDP-N-acetyl-alpha-D-glucosamine is bound by residues 12 to 14 (TAG), R166, S196, and Q291.

This sequence belongs to the glycosyltransferase 28 family. MurG subfamily.

It is found in the cell membrane. It carries out the reaction di-trans,octa-cis-undecaprenyl diphospho-N-acetyl-alpha-D-muramoyl-L-alanyl-D-glutamyl-meso-2,6-diaminopimeloyl-D-alanyl-D-alanine + UDP-N-acetyl-alpha-D-glucosamine = di-trans,octa-cis-undecaprenyl diphospho-[N-acetyl-alpha-D-glucosaminyl-(1-&gt;4)]-N-acetyl-alpha-D-muramoyl-L-alanyl-D-glutamyl-meso-2,6-diaminopimeloyl-D-alanyl-D-alanine + UDP + H(+). It functions in the pathway cell wall biogenesis; peptidoglycan biosynthesis. Its function is as follows. Cell wall formation. Catalyzes the transfer of a GlcNAc subunit on undecaprenyl-pyrophosphoryl-MurNAc-pentapeptide (lipid intermediate I) to form undecaprenyl-pyrophosphoryl-MurNAc-(pentapeptide)GlcNAc (lipid intermediate II). This is UDP-N-acetylglucosamine--N-acetylmuramyl-(pentapeptide) pyrophosphoryl-undecaprenol N-acetylglucosamine transferase from Geobacillus kaustophilus (strain HTA426).